The following is a 400-amino-acid chain: Argininosuccinate synthase (400 aa).

Residues 9–17 (AYSGGVDTS) and Ala37 contribute to the ATP site. Position 88 (Tyr88) interacts with L-citrulline. Gly118 lines the ATP pocket. L-aspartate is bound by residues Thr120, Asn124, and Asp125. Asn124 contributes to the L-citrulline binding site. The L-citrulline site is built by Arg128, Ser176, Ser185, Glu261, and Tyr273.

The protein belongs to the argininosuccinate synthase family. Type 1 subfamily. Homotetramer.

Its subcellular location is the cytoplasm. The catalysed reaction is L-citrulline + L-aspartate + ATP = 2-(N(omega)-L-arginino)succinate + AMP + diphosphate + H(+). Its pathway is amino-acid biosynthesis; L-arginine biosynthesis; L-arginine from L-ornithine and carbamoyl phosphate: step 2/3. The protein is Argininosuccinate synthase of Prochlorococcus marinus (strain MIT 9211).